A 273-amino-acid polypeptide reads, in one-letter code: 2,3,4,5-tetrahydropyridine-2,6-dicarboxylate N-succinyltransferase (273 aa).

Arg-104 and Asp-141 together coordinate substrate.

It belongs to the transferase hexapeptide repeat family. As to quaternary structure, homotrimer.

Its subcellular location is the cytoplasm. The enzyme catalyses (S)-2,3,4,5-tetrahydrodipicolinate + succinyl-CoA + H2O = (S)-2-succinylamino-6-oxoheptanedioate + CoA. Its pathway is amino-acid biosynthesis; L-lysine biosynthesis via DAP pathway; LL-2,6-diaminopimelate from (S)-tetrahydrodipicolinate (succinylase route): step 1/3. The chain is 2,3,4,5-tetrahydropyridine-2,6-dicarboxylate N-succinyltransferase from Nitrosospira multiformis (strain ATCC 25196 / NCIMB 11849 / C 71).